The following is a 149-amino-acid chain: Large ribosomal subunit protein bL9 (149 aa).

The protein belongs to the bacterial ribosomal protein bL9 family.

Binds to the 23S rRNA. This is Large ribosomal subunit protein bL9 from Aliivibrio fischeri (strain ATCC 700601 / ES114) (Vibrio fischeri).